A 165-amino-acid chain; its full sequence is SsrA-binding protein (165 aa).

Belongs to the SmpB family.

The protein resides in the cytoplasm. Functionally, required for rescue of stalled ribosomes mediated by trans-translation. Binds to transfer-messenger RNA (tmRNA), required for stable association of tmRNA with ribosomes. tmRNA and SmpB together mimic tRNA shape, replacing the anticodon stem-loop with SmpB. tmRNA is encoded by the ssrA gene; the 2 termini fold to resemble tRNA(Ala) and it encodes a 'tag peptide', a short internal open reading frame. During trans-translation Ala-aminoacylated tmRNA acts like a tRNA, entering the A-site of stalled ribosomes, displacing the stalled mRNA. The ribosome then switches to translate the ORF on the tmRNA; the nascent peptide is terminated with the 'tag peptide' encoded by the tmRNA and targeted for degradation. The ribosome is freed to recommence translation, which seems to be the essential function of trans-translation. The polypeptide is SsrA-binding protein (Prochlorococcus marinus (strain MIT 9515)).